The sequence spans 360 residues: Putative mRNA-decapping protein (360 aa).

Residues 11–28 form a CCHC-type zinc finger; it reads HICSNCGRSGHEFRNCIE. The 185-residue stretch at 163–347 folds into the Nudix hydrolase domain; that stretch reads YKYDNILYHF…KKRILTRVYL (185 aa). Positions 242-264 match the Nudix box motif; the sequence is GRRDKRSEENMVCACREFEEETG. A Mg(2+)-binding site is contributed by glutamate 249. Glutamate 258 (nucleophile) is an active-site residue. Glutamate 262 contacts Mg(2+).

The protein belongs to the Nudix hydrolase family. DIPP subfamily. The cofactor is Mg(2+). Mn(2+) serves as cofactor.

The enzyme catalyses diphospho-myo-inositol polyphosphate + H2O = myo-inositol polyphosphate + phosphate.. In terms of biological role, might function as a decapping enzyme required for the removal of the 5'-end m7GpppN cap tethered to viral and host mRNAs to allow their decay in cells. In addition to the mRNA cap, probably also efficiently hydrolyzes diphosphoinositol polyphosphates. In Acanthamoeba polyphaga (Amoeba), this protein is Putative mRNA-decapping protein.